The following is a 241-amino-acid chain: Probable septum site-determining protein MinC (241 aa).

Residues 109-135 (PSGARERKVDPSSKTPAKPAEPTYRPT) are disordered.

The protein belongs to the MinC family. In terms of assembly, interacts with MinD and FtsZ.

In terms of biological role, cell division inhibitor that blocks the formation of polar Z ring septums. Rapidly oscillates between the poles of the cell to destabilize FtsZ filaments that have formed before they mature into polar Z rings. Prevents FtsZ polymerization. This Stutzerimonas stutzeri (strain A1501) (Pseudomonas stutzeri) protein is Probable septum site-determining protein MinC.